The primary structure comprises 502 residues: Actin nucleation-promoting factor WAS (502 aa).

Positions 39–148 (LGRKCLTLAT…ALVQEKIQKR (110 aa)) constitute a WH1 domain. Positions 146–240 (QKRNQRQSGD…KKISKADIGA (95 aa)) are disordered. Positions 201-211 (DIQNPDITSSR) are enriched in polar residues. S221 is subject to Phosphoserine. The region spanning 238–251 (IGAPSGFKHVSHVG) is the CRIB domain. Y291 is subject to Phosphotyrosine; by FYN and HCK. A disordered region spans residues 307-502 (MRRQEPLPPP…DEDEDDEWDD (196 aa)). GRSGPLPPXP motif repeat units follow at residues 337-346 (GRSGPLPPVP) and 376-385 (GRSGPLPPPP). A compositionally biased stretch (pro residues) spans 341–419 (PLPPVPLGIA…PAPPPLPPAL (79 aa)). The 18-residue stretch at 430-447 (GRGALLDQIRQGIQLNKT) folds into the WH2 domain. S483 and S484 each carry phosphoserine; by CK2. The span at 486–502 (EGEDQAGDEDEDDEWDD) shows a compositional bias: acidic residues.

As to quaternary structure, binds the Arp2/3 complex. Interacts with CDC42, RAC, NCK, HCK, FYN, SRC kinase FGR, BTK, ABL1, PSTPIP1, WIP, and to the p85 subunit of PLC-gamma. Interacts (via C-terminus) with ALDOA. Interacts with NCK1 (via SH3 domains). Interacts with FCHSD2. In terms of assembly, (Microbial infection) Interacts with E.coli effector protein EspF(U). Phosphorylated at Tyr-291 by FYN and HCK, inducing WAS effector activity after TCR engagement. Phosphorylation at Tyr-291 enhances WAS activity in promoting actin polymerization and filopodia formation. As to expression, expressed predominantly in the thymus. Also found, to a much lesser extent, in the spleen.

The protein localises to the cytoplasm. It localises to the cytoskeleton. It is found in the nucleus. Its function is as follows. Effector protein for Rho-type GTPases that regulates actin filament reorganization via its interaction with the Arp2/3 complex. Important for efficient actin polymerization. Possible regulator of lymphocyte and platelet function. Mediates actin filament reorganization and the formation of actin pedestals upon infection by pathogenic bacteria. In addition to its role in the cytoplasmic cytoskeleton, also promotes actin polymerization in the nucleus, thereby regulating gene transcription and repair of damaged DNA. Promotes homologous recombination (HR) repair in response to DNA damage by promoting nuclear actin polymerization, leading to drive motility of double-strand breaks (DSBs). This is Actin nucleation-promoting factor WAS (WAS) from Homo sapiens (Human).